Here is a 22-residue protein sequence, read N- to C-terminus: Probable ATP-dependent Clp protease proteolytic subunit (22 aa).

It belongs to the peptidase S14 family. Component of the chloroplastic Clp protease core complex.

It carries out the reaction Hydrolysis of proteins to small peptides in the presence of ATP and magnesium. alpha-casein is the usual test substrate. In the absence of ATP, only oligopeptides shorter than five residues are hydrolyzed (such as succinyl-Leu-Tyr-|-NHMec, and Leu-Tyr-Leu-|-Tyr-Trp, in which cleavage of the -Tyr-|-Leu- and -Tyr-|-Trp bonds also occurs).. In terms of biological role, cleaves peptides in various proteins in a process that requires ATP hydrolysis. Has a chymotrypsin-like activity. Plays a major role in the degradation of misfolded proteins. This Populus euphratica (Euphrates poplar) protein is Probable ATP-dependent Clp protease proteolytic subunit.